The chain runs to 877 residues: DNA mismatch repair protein MutS (877 aa).

627–634 contributes to the ATP binding site; it reads GPNMAGKS.

Belongs to the DNA mismatch repair MutS family.

Its function is as follows. This protein is involved in the repair of mismatches in DNA. It is possible that it carries out the mismatch recognition step. This protein has a weak ATPase activity. In Dinoroseobacter shibae (strain DSM 16493 / NCIMB 14021 / DFL 12), this protein is DNA mismatch repair protein MutS.